Reading from the N-terminus, the 436-residue chain is Adenylosuccinate synthetase (436 aa).

Residues 22-28 (GDEGKGK) and 50-52 (GHE) each bind GTP. Catalysis depends on Asp23, which acts as the Proton acceptor. Positions 23 and 50 each coordinate Mg(2+). IMP-binding positions include 23 to 26 (DEGK), 48 to 51 (NAGH), Thr141, Arg155, Asn231, Thr246, and Arg310. His51 (proton donor) is an active-site residue. 306-312 (VSTARVR) contributes to the substrate binding site. GTP-binding positions include Arg312, 338–340 (KMD), and 424–426 (GVG).

The protein belongs to the adenylosuccinate synthetase family. As to quaternary structure, homodimer. Mg(2+) serves as cofactor.

The protein localises to the cytoplasm. The enzyme catalyses IMP + L-aspartate + GTP = N(6)-(1,2-dicarboxyethyl)-AMP + GDP + phosphate + 2 H(+). Its pathway is purine metabolism; AMP biosynthesis via de novo pathway; AMP from IMP: step 1/2. Its function is as follows. Plays an important role in the salvage pathway for purine nucleotide biosynthesis. Catalyzes the first committed step in the biosynthesis of AMP from IMP. The protein is Adenylosuccinate synthetase of Babesia bovis.